We begin with the raw amino-acid sequence, 100 residues long: Large ribosomal subunit protein bL28 (100 aa).

The segment at Met1–Ser21 is disordered. The span at Gln10–Ser19 shows a compositional bias: polar residues.

It belongs to the bacterial ribosomal protein bL28 family.

In Ehrlichia canis (strain Jake), this protein is Large ribosomal subunit protein bL28.